A 335-amino-acid polypeptide reads, in one-letter code: Ferrochelatase (335 aa).

Positions 192 and 291 each coordinate Fe cation.

Belongs to the ferrochelatase family.

It localises to the cytoplasm. It carries out the reaction heme b + 2 H(+) = protoporphyrin IX + Fe(2+). It participates in porphyrin-containing compound metabolism; protoheme biosynthesis; protoheme from protoporphyrin-IX: step 1/1. Its function is as follows. Catalyzes the ferrous insertion into protoporphyrin IX. The sequence is that of Ferrochelatase from Bdellovibrio bacteriovorus (strain ATCC 15356 / DSM 50701 / NCIMB 9529 / HD100).